The primary structure comprises 88 residues: Small ribosomal subunit protein bS18 (88 aa).

It belongs to the bacterial ribosomal protein bS18 family. As to quaternary structure, part of the 30S ribosomal subunit. Forms a tight heterodimer with protein bS6.

In terms of biological role, binds as a heterodimer with protein bS6 to the central domain of the 16S rRNA, where it helps stabilize the platform of the 30S subunit. The sequence is that of Small ribosomal subunit protein bS18 from Syntrophus aciditrophicus (strain SB).